The chain runs to 525 residues: Ribonuclease III domain-containing protein RNC1, chloroplastic (525 aa).

The N-terminal 28 residues, 1–28 (MGPPAMAFQALTLTPLPFSLHSSSRRVR), are a transit peptide targeting the chloroplast. RNase III domains follow at residues 125–271 (LLEA…LCFG) and 403–503 (EHPR…CVYG).

Interacts with RNA. Part of large ribonucleo-protein particles that contain CAF1 and/or CAF2.

Its subcellular location is the plastid. It is found in the chloroplast stroma. In terms of biological role, binds specific group II introns in chloroplasts and facilitates their splicing. Acts on both subgroup IIA and subgroup IIB introns. The substrates of the subgroup II also require the CRM domain proteins CAF1 or CAF2. Binds both single-stranded and double-stranded RNA non-specifically, but lacks endonuclease activity. Required for plastid ribosome biogenesis. The chain is Ribonuclease III domain-containing protein RNC1, chloroplastic from Zea mays (Maize).